We begin with the raw amino-acid sequence, 66 residues long: UPF0370 protein YpfN (66 aa).

A helical membrane pass occupies residues 4–24 (LAKYWWILVLVFLVGVLLNVI). The interval 39 to 66 (KPELPPHRDFNDKWDDEDDWPKKDQSKK) is disordered. Residues 42-51 (LPPHRDFNDK) are compositionally biased toward basic and acidic residues.

This sequence belongs to the UPF0370 family.

The protein localises to the cell membrane. This is UPF0370 protein YpfN from Salmonella arizonae (strain ATCC BAA-731 / CDC346-86 / RSK2980).